The sequence spans 521 residues: Phosphoenolpyruvate carboxykinase (ATP) (521 aa).

Residues arginine 52, tyrosine 186, and lysine 192 each coordinate substrate. ATP-binding positions include lysine 192, histidine 211, and 227-235 (GLSGTGKTT). Positions 192 and 211 each coordinate Mn(2+). Aspartate 248 is a Mn(2+) binding site. ATP contacts are provided by residues glutamate 276, arginine 313, 432 to 433 (RI), and threonine 438. Arginine 313 contributes to the substrate binding site.

The protein belongs to the phosphoenolpyruvate carboxykinase (ATP) family. The cofactor is Mn(2+).

It is found in the cytoplasm. It carries out the reaction oxaloacetate + ATP = phosphoenolpyruvate + ADP + CO2. Its pathway is carbohydrate biosynthesis; gluconeogenesis. Functionally, involved in the gluconeogenesis. Catalyzes the conversion of oxaloacetate (OAA) to phosphoenolpyruvate (PEP) through direct phosphoryl transfer between the nucleoside triphosphate and OAA. The chain is Phosphoenolpyruvate carboxykinase (ATP) from Caldanaerobacter subterraneus subsp. tengcongensis (strain DSM 15242 / JCM 11007 / NBRC 100824 / MB4) (Thermoanaerobacter tengcongensis).